The chain runs to 272 residues: Ethanolamine ammonia-lyase small subunit (272 aa).

Adenosylcob(III)alamin-binding residues include Val161, Glu182, and Cys211.

Belongs to the EutC family. As to quaternary structure, the basic unit is a heterodimer which dimerizes to form tetramers. The heterotetramers trimerize; 6 large subunits form a core ring with 6 small subunits projecting outwards. It depends on adenosylcob(III)alamin as a cofactor.

Its subcellular location is the bacterial microcompartment. It carries out the reaction ethanolamine = acetaldehyde + NH4(+). Its pathway is amine and polyamine degradation; ethanolamine degradation. Functionally, catalyzes the deamination of various vicinal amino-alcohols to oxo compounds. Allows this organism to utilize ethanolamine as the sole source of nitrogen and carbon in the presence of external vitamin B12. The polypeptide is Ethanolamine ammonia-lyase small subunit (Pseudomonas putida (strain GB-1)).